Here is a 144-residue protein sequence, read N- to C-terminus: Na(+)/H(+) antiporter subunit B (144 aa).

4 consecutive transmembrane segments (helical) span residues 9–31, 41–58, 75–97, and 117–139; these read VLLHTLTRVVTFIILAFSVYLFF, FIGGLMTASALLLMYLGF, IAFGLLIAIFTGFGGLLVGDPYL, and ALPFDLGIYLVVIGIALTIILTI.

It belongs to the CPA3 antiporters (TC 2.A.63) subunit B family. As to quaternary structure, forms a heterooligomeric complex that consists of seven subunits: MrpA, MrpB, MrpC, MrpD, MrpE, MrpF and MrpG.

It is found in the cell membrane. In terms of biological role, mnh complex is a Na(+)Li(+)/H(+) antiporter involved in Na(+) and/or Li(+) excretion and Na(+) resistance. Na(+)/H(+) antiport consumes a transmembrane electrical potential, and is thus inferred to be electrogenic. Does not transport K(+), Ca(2+) or Mg(2+). In Alkalihalophilus pseudofirmus (strain ATCC BAA-2126 / JCM 17055 / OF4) (Bacillus pseudofirmus), this protein is Na(+)/H(+) antiporter subunit B (mrpB).